A 425-amino-acid chain; its full sequence is C2H2 type master regulator of conidiophore development brlA (425 aa).

Disordered regions lie at residues 28–72 (MASS…RHTG), 232–257 (KTHSPTTPVRSCSLGTTSGTDTPMSR), and 281–301 (VQRQPSRKVARKQSSKQSLSL). A compositionally biased stretch (low complexity) spans 30–44 (SSFSPMESPTPTPTS). Residues 232–256 (KTHSPTTPVRSCSLGTTSGTDTPMS) show a composition bias toward polar residues. Positions 285-294 (PSRKVARKQS) are enriched in basic residues. 2 consecutive C2H2-type zinc fingers follow at residues 321–345 (KGRFKRQEHLKRHMKSHSKEKPHVC) and 351–376 (ERAFSRSDNLNAHYTKTHSKRGGRNR). Residues 365–374 (TKTHSKRGGR) show a composition bias toward basic residues. The disordered stretch occupies residues 365 to 425 (TKTHSKRGGR…RETSEEAWLE (61 aa)).

The protein resides in the nucleus. In terms of biological role, brlA, abaA and wetA are pivotal regulators of conidiophore development and conidium maturation. They act individually and together to regulate their own expression and that of numerous other sporulation-specific genes. Binds promoters of target genes at brlA response elements (BREs) containing the conserved sequence 5'-(C/A)(A/G)AGGG(G/A)-3'. Also coordinates the expression of carbohydrate-active enzymes and of the key effectors of cell wall remodeling during autolysis. The chain is C2H2 type master regulator of conidiophore development brlA from Aspergillus niger (strain ATCC MYA-4892 / CBS 513.88 / FGSC A1513).